A 545-amino-acid chain; its full sequence is Threonine--tRNA ligase catalytic subunit (545 aa).

The catalytic stretch occupies residues 139–433 (DHRLIGEKLD…LLEHFKGKLP (295 aa)). C231, H282, and H410 together coordinate Zn(2+).

The protein belongs to the class-II aminoacyl-tRNA synthetase family. As to quaternary structure, homodimer. Probably interacts with its editing subunit. The cofactor is Zn(2+).

Its subcellular location is the cytoplasm. It catalyses the reaction tRNA(Thr) + L-threonine + ATP = L-threonyl-tRNA(Thr) + AMP + diphosphate + H(+). Its function is as follows. Catalyzes the attachment of threonine to tRNA(Thr) in a two-step reaction: L-threonine is first activated by ATP to form Thr-AMP and then transferred to the acceptor end of tRNA(Thr). Also activates L-serine and transfers it to tRNA(Thr) but cannot deacylate incorrectly charged amino acid; unlike most archaea the editing function is found in a freestanding protein. This is Threonine--tRNA ligase catalytic subunit from Saccharolobus islandicus (strain M.16.4 / Kamchatka #3) (Sulfolobus islandicus).